Reading from the N-terminus, the 55-residue chain is Light-harvesting polypeptide B-800/860 beta chain (55 aa).

Topologically, residues 1-21 (ADANKVWPTGLTVAEAEELHT) are cytoplasmic. A helical membrane pass occupies residues 22-44 (YVTNGFRVFVGIAVVAHVLVFAA). H38 is an a bacteriochlorophyll binding site. The Periplasmic segment spans residues 45 to 55 (HPWGRGGALVA).

The protein belongs to the antenna complex beta subunit family. As to quaternary structure, the core complex is formed by different alpha and beta chains, binding bacteriochlorophyll molecules, and arranged most probably in tetrameric structures disposed around the reaction center. The non-pigmented gamma chains may constitute additional components.

The protein localises to the cell inner membrane. In terms of biological role, antenna complexes are light-harvesting systems, which transfer the excitation energy to the reaction centers. This chain is Light-harvesting polypeptide B-800/860 beta chain, found in Rhodocyclus tenuis (Rhodospirillum tenue).